The chain runs to 265 residues: 14-3-3-like protein GF14-D (265 aa).

Residues 244 to 265 (DANDDGGDEIKEAAAPKEPGDQ) form a disordered region. Basic and acidic residues predominate over residues 251-265 (DEIKEAAAPKEPGDQ).

The protein belongs to the 14-3-3 family. In terms of assembly, interacts with BZR1. Interacts with ABI5.

Its function is as follows. Is associated with a DNA binding complex that binds to the G box, a well-characterized cis-acting DNA regulatory element found in plant genes. In Oryza sativa subsp. japonica (Rice), this protein is 14-3-3-like protein GF14-D (GF14D).